Reading from the N-terminus, the 469-residue chain is Adenosylhomocysteinase (469 aa).

The substrate site is built by threonine 63, aspartate 139, and glutamate 164. An NAD(+)-binding site is contributed by 165–167 (TTT). Residues lysine 194 and aspartate 198 each coordinate substrate. Residues asparagine 199, 228–233 (GYGDVG), glutamate 251, asparagine 300, 321–323 (IGH), and asparagine 375 contribute to the NAD(+) site.

It belongs to the adenosylhomocysteinase family. NAD(+) serves as cofactor.

It is found in the cytoplasm. It catalyses the reaction S-adenosyl-L-homocysteine + H2O = L-homocysteine + adenosine. It functions in the pathway amino-acid biosynthesis; L-homocysteine biosynthesis; L-homocysteine from S-adenosyl-L-homocysteine: step 1/1. In terms of biological role, may play a key role in the regulation of the intracellular concentration of adenosylhomocysteine. The sequence is that of Adenosylhomocysteinase from Pseudomonas entomophila (strain L48).